The following is a 102-amino-acid chain: Small ribosomal subunit protein uS10 (102 aa).

It belongs to the universal ribosomal protein uS10 family. Part of the 30S ribosomal subunit.

Its function is as follows. Involved in the binding of tRNA to the ribosomes. This chain is Small ribosomal subunit protein uS10, found in Fervidobacterium nodosum (strain ATCC 35602 / DSM 5306 / Rt17-B1).